We begin with the raw amino-acid sequence, 687 residues long: Adhesion G-protein coupled receptor G1 (687 aa).

The first 25 residues, 1 to 25, serve as a signal peptide directing secretion; the sequence is MAVQVLRQMVYFLLSLFSLVQGAHS. Residue 26–33 participates in heparin binding; the sequence is GSPREDFR. Residues 26–402 are Extracellular-facing; it reads GSPREDFRFC…TEVEATHKHY (377 aa). Intrachain disulfides connect Cys35-Cys91 and Cys121-Cys177. N-linked (GlcNAc...) asparagine glycans are attached at residues Asn39, Asn148, and Asn171. Residue 190-200 coordinates heparin; it reads LQHPQKAAKRP. The region spanning 224-395 is the GAIN-B domain; it reads DTLSFEEDRV…AVLMVSSTEV (172 aa). 4 N-linked (GlcNAc...) asparagine glycosylation sites follow: Asn234, Asn303, Asn324, and Asn341. Cystine bridges form between Cys346–Cys377 and Cys366–Cys379. Residues 346 to 395 form a GPS region; it reads CVFWVEDPASSSTGSWSSAGCETVSRDTQTSCLCNHLTYFAVLMVSSTEV. Residues 384–397 are stachel; sequence YFAVLMVSSTEVEA. A helical transmembrane segment spans residues 403–423; sequence LTLLSYVGCVISALACVFTIA. Residues 424-442 are Cytoplasmic-facing; it reads AYLCSRRKSRDYTIKVHMN. A helical transmembrane segment spans residues 443–463; the sequence is LLSAVFLLDVSFLLSEPVALT. Residues 464–471 are Extracellular-facing; that stretch reads GSEAACRT. A helical transmembrane segment spans residues 472–492; it reads SAMFLHFSLLACLSWMGLEGY. At 493-512 the chain is on the cytoplasmic side; sequence NLYRLVVEVFGTYVPGYLLK. Residues 513 to 533 traverse the membrane as a helical segment; sequence LSIVGWGFPVFLVTLVALVDV. Over 534–570 the chain is Extracellular; sequence NNYGPIILAVRRTPERVTYPSMCWIRDSLVSYVTNLG. The chain crosses the membrane as a helical span at residues 571 to 591; the sequence is LFSLVFLFNLAMLATMVVQIL. Topologically, residues 592 to 603 are cytoplasmic; that stretch reads RLRPHSQNWPHV. A helical membrane pass occupies residues 604 to 624; it reads LTLLGLSLVLGLPWALVFFSF. The Extracellular portion of the chain corresponds to 625–630; that stretch reads ASGTFQ. Residues 631 to 651 traverse the membrane as a helical segment; the sequence is LVILYLFSIITSFQGFLIFLW. Residues 652 to 687 are Cytoplasmic-facing; sequence YWSMRFQAQGGPSPLKNNSDSAKLPISSGSTSSSRI. Positions 664–687 are disordered; it reads SPLKNNSDSAKLPISSGSTSSSRI. Low complexity predominate over residues 678 to 687; sequence SSGSTSSSRI.

It belongs to the G-protein coupled receptor 2 family. LN-TM7 subfamily. Heterodimer of 2 chains generated by proteolytic processing; the large extracellular N-terminal fragment (ADGRG1 NT) and the membrane-bound C-terminal fragment (ADGRG1-CT) predominantly remain associated and non-covalently linked. ADGRG1 NT self-associates in a trans-trans manner; the homophilic interaction enhances receptor signaling. Interacts with TGM2. Interacts with heparin; leading to the reduction of ADGRG1 shedding. Interacts with COL3A1. Part of a GPCR-tetraspanin complex at least consisting of ADGRG1, CD81, eventually CD9, and GNA11 in which CD81 is enhancing the association of ADGRG1 with GNA11. In terms of processing, autoproteolytically cleaved into 2 fragments; the large extracellular N-terminal fragment and the membroune-bound C-terminal fragment predominantly remain associated and non-covalently linked. Post-translationally, N-glycosylated. The secreted ADGRG1 N-terminal fragment is heavily glycosylated. Ubiquitinated. Undergoes polyubiquitination upon activation. In terms of tissue distribution, expressed in neural progenitor cells in fetal forbrain. Expressed in migrating neurons. Expressed in radial glial endfeet (at protein level). Expressed in peritubular myoid cells, Sertoli cells, and germ cells of the testis.

It is found in the cell membrane. The protein localises to the secreted. It localises to the membrane raft. With respect to regulation, forms a heterodimer of 2 chains generated by proteolytic processing that remain associated through non-covalent interactions mediated by the GAIN-B domain. In the inactivated receptor, the Stachel sequence (also named stalk) is embedded in the GAIN-B domain, where it adopts a beta-strand conformation. On activation, the Stachel moves into the 7 transmembrane region and adopts a twisted hook-shaped configuration that forms contacts within the receptor, leading to coupling of a G-alpha protein, which activates signaling. The cleaved GAIN-B and N-terminal domains can then dissociate from the rest of the receptor. Activated by the small-molecule agonist, 3-alpha-acetoxydihydrodeoxygedunin (3-alpha-DOG). Its function is as follows. Adhesion G-protein coupled receptor (aGPCR) for steroid hormone 17alpha-hydroxypregnenolone (17-OH), which is involved in cell adhesion and cell-cell interactions. Ligand binding causes a conformation change that triggers signaling via guanine nucleotide-binding proteins (G proteins) and modulates the activity of downstream effectors, such as RhoA pathway. ADGRG1 is coupled to G(12) and/or G(13) G proteins (GNA12 and GNA13, respectively) and mediates the activation Rho small GTPases. Acts as a potent suppressor of ferroptosis: binding to 17-OH-binding initiates signaling that down-regulates CD36 and alleviates ferroptosis-induced liver injury. Ligand-binding also induces cell adhesion activity via association with proteins such as collagen III/COL3A1 and TGM2. Mediates cell matrix adhesion in developing neurons and hematopoietic stem cells. Involved in cortical development, specifically in maintenance of the pial basement membrane integrity and in cortical lamination: association with COL3A1 in the developing brain inhibits neuronal migration via activation of the RhoA pathway. Together with TGM2, acts as a regulator of myelination and myelin repair in oligodendrocyte precursor cells. Acts as a hemostatic sensor of shear force: G protein-coupled receptor signaling is activated in response to shear force in platelets, promoting G(13) G protein signaling, and platelet shape change and aggregation in a COL3A1-dependent manner. Acts as an inhibitor of VEGFA production thereby inhibiting angiogenesis through a signaling pathway mediated by PRKCA. Plays a role in the maintenance of hematopoietic stem cells in bone marrow niche. Plays an essential role in testis development. In terms of biological role, adhesion G-protein coupled receptor (aGPCR) for phosphatidylserine, which is involved in microglia-mediated synapse pruning during development. Required to maintain appropriate synaptic numbers in several brain regions in a time- and circuit-dependent fashion: phosphatidylserine-binding acts as a 'eat-me' signal for apoptotic cells, leading to microglial engulfment of phosphatidylserine-positive synapses. This chain is Adhesion G-protein coupled receptor G1, found in Mus musculus (Mouse).